The sequence spans 358 residues: Tripartite motif-containing protein 54 (358 aa).

The segment at 26 to 82 adopts an RING-type zinc-finger fold; sequence CPICLEMFSKPVVILPCQHNLCRKCANDVFQASNPLWQSRGSTTVSSGGRFRCPSCR. The B box-type zinc finger occupies 121–163; sequence EQHLMCEEHEEEKINIYCLSCEVPTCSLCKVFGAHKDCEVAPL. Residues Cys-126, His-129, Cys-149, and His-155 each contribute to the Zn(2+) site. Residues 168-211 are mediates microtubule-binding and homooligomerization; sequence KRQKSELSDGIAMLVAGNDRVQAVITQMEEVCQTIEDNSRRQKQ. Positions 220 to 258 form a coiled coil; sequence LCAVLEERKGELLQALAREQEEKLQRVRGLIRQYGDHLE. Residues 271–329 enclose the COS domain; the sequence is MEEPQMALYLQQAKELINKVGAMSKVELAGRPEPGYESMEQFTVRVEHVAEMLRTIDFQ. The segment at 326–358 is disordered; sequence IDFQPGASGEEEEVAPDGEEGSAGPEEERPDGP. The segment covering 334–345 has biased composition (acidic residues); that stretch reads GEEEEVAPDGEE.

Homooligomer and heterooligomer. Interacts with tubulin. Interacts with TRIM63 and probably with TRIM55. Specifically expressed in heart and skeletal muscle.

Its subcellular location is the cytoplasm. It localises to the cytoskeleton. The protein localises to the myofibril. The protein resides in the sarcomere. It is found in the z line. May bind and stabilize microtubules during myotubes formation. This is Tripartite motif-containing protein 54 (TRIM54) from Homo sapiens (Human).